The primary structure comprises 127 residues: Large ribosomal subunit protein uL22 (127 aa).

Part of the 50S ribosomal subunit.

Its function is as follows. This protein binds specifically to 23S rRNA; its binding is stimulated by other ribosomal proteins, e.g. L4, L17, and L20. It is important during the early stages of 50S assembly. It makes multiple contacts with different domains of the 23S rRNA in the assembled 50S subunit and ribosome. In terms of biological role, the globular domain of the protein is located near the polypeptide exit tunnel on the outside of the subunit, while an extended beta-hairpin is found that lines the wall of the exit tunnel in the center of the 70S ribosome. This is Large ribosomal subunit protein uL22 from Rhodopseudomonas palustris (strain ATCC BAA-98 / CGA009).